The chain runs to 480 residues: Glutamyl-tRNA(Gln) amidotransferase subunit A (480 aa).

Catalysis depends on charge relay system residues K76 and S151. S175 serves as the catalytic Acyl-ester intermediate.

It belongs to the amidase family. GatA subfamily. As to quaternary structure, heterotrimer of A, B and C subunits.

It carries out the reaction L-glutamyl-tRNA(Gln) + L-glutamine + ATP + H2O = L-glutaminyl-tRNA(Gln) + L-glutamate + ADP + phosphate + H(+). Its function is as follows. Allows the formation of correctly charged Gln-tRNA(Gln) through the transamidation of misacylated Glu-tRNA(Gln) in organisms which lack glutaminyl-tRNA synthetase. The reaction takes place in the presence of glutamine and ATP through an activated gamma-phospho-Glu-tRNA(Gln). The sequence is that of Glutamyl-tRNA(Gln) amidotransferase subunit A from Exiguobacterium sibiricum (strain DSM 17290 / CCUG 55495 / CIP 109462 / JCM 13490 / 255-15).